The following is a 218-amino-acid chain: Protein GrpE (218 aa).

The span at 1 to 10 (MSGEASTPAQ) shows a compositional bias: polar residues. Disordered stretches follow at residues 1–44 (MSGE…DPAE) and 198–218 (SMGP…AEDS). A compositionally biased stretch (low complexity) spans 200–218 (GPGPSADAEGAASAEAEDS).

It belongs to the GrpE family. In terms of assembly, homodimer.

It localises to the cytoplasm. In terms of biological role, participates actively in the response to hyperosmotic and heat shock by preventing the aggregation of stress-denatured proteins, in association with DnaK and GrpE. It is the nucleotide exchange factor for DnaK and may function as a thermosensor. Unfolded proteins bind initially to DnaJ; upon interaction with the DnaJ-bound protein, DnaK hydrolyzes its bound ATP, resulting in the formation of a stable complex. GrpE releases ADP from DnaK; ATP binding to DnaK triggers the release of the substrate protein, thus completing the reaction cycle. Several rounds of ATP-dependent interactions between DnaJ, DnaK and GrpE are required for fully efficient folding. The polypeptide is Protein GrpE (Parasynechococcus marenigrum (strain WH8102)).